The chain runs to 110 residues: Chorion class B protein M2410 (110 aa).

4 tandem repeats follow at residues 1-4, 5-9, 10-14, and 15-19. A 4 X 5 AA tandem repeats of G-Y-G-G-L region spans residues 1-19; the sequence is YGGLGYGGLGYGGLGYGGL. A left arm region spans residues 1 to 27; it reads YGGLGYGGLGYGGLGYGGLGGGCGRGF. The tract at residues 28–96 is central domain; sequence SGGGLPVATA…GNGDVGITRE (69 aa). The tract at residues 97–110 is right arm (Gly-rich tandem repeats); the sequence is GGLGYGAGYGGGYG.

Belongs to the chorion protein family.

In terms of biological role, this protein is one of many from the eggshell of the silk moth. The protein is Chorion class B protein M2410 of Bombyx mori (Silk moth).